A 1157-amino-acid polypeptide reads, in one-letter code: uncharacterized protein (1157 aa).

Residues Met-1 to Gly-18 form the signal peptide. Cys-19 carries N-palmitoyl cysteine lipidation. Cys-19 carries the S-diacylglycerol cysteine lipid modification. 4 consecutive transmembrane segments (helical) span residues Leu-292–Gly-312, Leu-394–Phe-414, Ala-423–Phe-443, and Ile-458–Ile-478. The segment at Gln-1134 to Lys-1157 is disordered. Basic and acidic residues predominate over residues Lys-1148–Lys-1157.

This sequence belongs to the TrbL/VirB6 family.

It localises to the cell membrane. This is an uncharacterized protein from Rickettsia bellii (strain RML369-C).